The primary structure comprises 82 residues: Apovitellenin-1 (82 aa).

It belongs to the apovitellenin family. As to quaternary structure, monomer. Found in egg yolk and in plasma.

Protein component of the very low density lipoprotein (VLDL) of egg-laying females. Potent lipoprotein lipase inhibitor, preventing the loss of triglycerides from VLDL on their way from the liver to the growing oocytes. The polypeptide is Apovitellenin-1 (Anas platyrhynchos (Mallard)).